Here is a 121-residue protein sequence, read N- to C-terminus: Large ribosomal subunit protein uL18 (121 aa).

The protein belongs to the universal ribosomal protein uL18 family. In terms of assembly, part of the 50S ribosomal subunit; part of the 5S rRNA/L5/L18/L25 subcomplex. Contacts the 5S and 23S rRNAs.

This is one of the proteins that bind and probably mediate the attachment of the 5S RNA into the large ribosomal subunit, where it forms part of the central protuberance. In Polaromonas sp. (strain JS666 / ATCC BAA-500), this protein is Large ribosomal subunit protein uL18.